Here is a 377-residue protein sequence, read N- to C-terminus: S-adenosylmethionine decarboxylase proenzyme 2 (377 aa).

Active-site residues include Glu24 and Glu27. The Schiff-base intermediate with substrate; via pyruvic acid role is filled by Ser84. Pyruvic acid (Ser); by autocatalysis is present on Ser84. Cys98 functions as the Proton donor; for catalytic activity in the catalytic mechanism. Residues Ser246 and His259 each act as proton acceptor; for processing activity in the active site.

This sequence belongs to the eukaryotic AdoMetDC family. Pyruvate is required as a cofactor. In terms of processing, is synthesized initially as an inactive proenzyme. Formation of the active enzyme involves a self-maturation process in which the active site pyruvoyl group is generated from an internal serine residue via an autocatalytic post-translational modification. Two non-identical subunits are generated from the proenzyme in this reaction, and the pyruvate is formed at the N-terminus of the alpha chain, which is derived from the carboxyl end of the proenzyme. The post-translation cleavage follows an unusual pathway, termed non-hydrolytic serinolysis, in which the side chain hydroxyl group of the serine supplies its oxygen atom to form the C-terminus of the beta chain, while the remainder of the serine residue undergoes an oxidative deamination to produce ammonia and the pyruvoyl group blocking the N-terminus of the alpha chain.

It catalyses the reaction S-adenosyl-L-methionine + H(+) = S-adenosyl 3-(methylsulfanyl)propylamine + CO2. The protein operates within amine and polyamine biosynthesis; S-adenosylmethioninamine biosynthesis; S-adenosylmethioninamine from S-adenosyl-L-methionine: step 1/1. This chain is S-adenosylmethionine decarboxylase proenzyme 2 (SAMDC2), found in Dianthus caryophyllus (Carnation).